A 253-amino-acid chain; its full sequence is tRNA (guanine-N(1)-)-methyltransferase (253 aa).

S-adenosyl-L-methionine-binding positions include glycine 111 and 131–136 (LGDFVL).

The protein belongs to the RNA methyltransferase TrmD family. In terms of assembly, homodimer.

The protein localises to the cytoplasm. It catalyses the reaction guanosine(37) in tRNA + S-adenosyl-L-methionine = N(1)-methylguanosine(37) in tRNA + S-adenosyl-L-homocysteine + H(+). In terms of biological role, specifically methylates guanosine-37 in various tRNAs. The protein is tRNA (guanine-N(1)-)-methyltransferase of Synechococcus sp. (strain JA-3-3Ab) (Cyanobacteria bacterium Yellowstone A-Prime).